Here is a 55-residue protein sequence, read N- to C-terminus: Large ribosomal subunit protein bL33B (55 aa).

This sequence belongs to the bacterial ribosomal protein bL33 family.

The protein is Large ribosomal subunit protein bL33B of Salinispora arenicola (strain CNS-205).